Reading from the N-terminus, the 1073-residue chain is Probable nuclear hormone receptor HR38 (1073 aa).

Disordered regions lie at residues 55-87, 150-185, 263-326, 437-458, 492-514, 529-579, and 618-640; these read NLNAPTHQQSHTSHLQHAQQHQTHQQHPLLPPP, TPAPPATEPRKIKPLGAGKLKVGKTDSNSDSNSNCD, TQTA…LVSP, ALHAQQQQQQQQQQQQQQQQHQ, KYNSSSGSSPQQASSSSTAAPTP, PPLS…NSGG, and GQQQQQQQQSYQQHNYNSHNGER. Composition is skewed to low complexity over residues 59–82, 175–185, and 263–277; these read PTHQQSHTSHLQHAQQHQTHQQHP, DSNSDSNSNCD, and TQTASTTTTTSASAA. Residues 279 to 291 are compositionally biased toward basic residues; that stretch reads HHQHHNHLLHQQH. Composition is skewed to low complexity over residues 292 to 326, 441 to 458, and 495 to 514; these read HNQQQQQQQQQQQQQQQQQQQEHLQQQHQQQLVSP, QQQQQQQQQQQQQQQQHQ, and SSSGSSPQQASSSSTAAPTP. Positions 619-636 are enriched in low complexity; it reads QQQQQQQQSYQQHNYNSH. Residues 741-816 constitute a DNA-binding region (nuclear receptor); that stretch reads SQLCAVCGDT…VGMVKEVVRT (76 aa). 2 NR C4-type zinc fingers span residues 744 to 764 and 780 to 804; these read CAVCGDTAACQHYGVRTCEGC and CLADKNCPVDKRRRNRCQFCRFQKC. The interval 819-841 is disordered; it reads LKGRRGRLPSKPKSPQESPPSPP. The region spanning 840-1070 is the NR LBD domain; the sequence is PPISLITALV…ALIENMFVTT (231 aa).

The protein belongs to the nuclear hormone receptor family. NR4 subfamily. Forms a heterodimer with USP. As to expression, ubiquitously expressed in preblastoderm embryos, specifically in central nervous system and intestinal tract. Highly expressed in third instar larval imaginal disks and brain complexes, but not in ovaries.

It localises to the nucleus. Functionally, binds to NGFI-B response elements. Plays an important role in late stages of epidermal metamorphosis. The chain is Probable nuclear hormone receptor HR38 (Hr38) from Drosophila melanogaster (Fruit fly).